The chain runs to 261 residues: Guanine nucleotide exchange factor BopE (261 aa).

Belongs to the GEF (guanine exchange factor) SopE family. Monomer. Interacts with human CDC42.

Its subcellular location is the secreted. Its function is as follows. Activator for both CDC42 and RAC1 by directly interacting with these Rho GTPases and acting as a guanine nucleotide exchange factor (GEF). This activation results in actin cytoskeleton rearrangements and stimulates membrane ruffling, thus promoting bacterial entry into non-phagocytic cells. The polypeptide is Guanine nucleotide exchange factor BopE (bopE) (Burkholderia pseudomallei (strain 1710b)).